Reading from the N-terminus, the 215-residue chain is Interleukin-12 subunit alpha (215 aa).

Residues 1–22 (MCSSRCLLFLATLAFLIHLSLA) form the signal peptide. 3 cysteine pairs are disulfide-bonded: cysteine 33-cysteine 106, cysteine 60-cysteine 192, and cysteine 81-cysteine 119. Asparagine 89 is a glycosylation site (N-linked (GlcNAc...) asparagine).

Belongs to the IL-6 superfamily. As to quaternary structure, heterodimer with IL12B; disulfide-linked. This heterodimer is known as interleukin IL-12. Heterodimer with EBI3/IL27B; not disulfide-linked. This heterodimer is known as interleukin IL-35. Interacts with NBR1; this interaction promotes IL-12 secretion.

Its subcellular location is the secreted. Heterodimerizes with IL12B to form the IL-12 cytokine or with EBI3/IL27B to form the IL-35 cytokine. IL-12 is primarily produced by professional antigen-presenting cells (APCs) such as B-cells and dendritic cells (DCs) as well as macrophages and granulocytes and regulates T-cell and natural killer-cell responses, induces the production of interferon-gamma (IFN-gamma), favors the differentiation of T-helper 1 (Th1) cells and is an important link between innate resistance and adaptive immunity. Mechanistically, exerts its biological effects through a receptor composed of IL12R1 and IL12R2 subunits. Binding to the receptor results in the rapid tyrosine phosphorylation of a number of cellular substrates including the JAK family kinases TYK2 and JAK2. In turn, recruited STAT4 gets phosphorylated and translocates to the nucleus where it regulates cytokine/growth factor responsive genes. As part of IL-35, plays essential roles in maintaining the immune homeostasis of the liver microenvironment and also functions as an immune-suppressive cytokine. Mediates biological events through unconventional receptors composed of IL12RB2 and gp130/IL6ST heterodimers or homodimers. Signaling requires the transcription factors STAT1 and STAT4, which form a unique heterodimer that binds to distinct DNA sites. In Sigmodon hispidus (Hispid cotton rat), this protein is Interleukin-12 subunit alpha (IL12A).